Here is a 358-residue protein sequence, read N- to C-terminus: Uroporphyrinogen decarboxylase (358 aa).

Substrate is bound by residues 36–40 (RQAGR), D85, Y160, S215, and H338.

It belongs to the uroporphyrinogen decarboxylase family. As to quaternary structure, homodimer.

It is found in the cytoplasm. It catalyses the reaction uroporphyrinogen III + 4 H(+) = coproporphyrinogen III + 4 CO2. It participates in porphyrin-containing compound metabolism; protoporphyrin-IX biosynthesis; coproporphyrinogen-III from 5-aminolevulinate: step 4/4. Functionally, catalyzes the decarboxylation of four acetate groups of uroporphyrinogen-III to yield coproporphyrinogen-III. The sequence is that of Uroporphyrinogen decarboxylase from Corynebacterium glutamicum (strain R).